A 1260-amino-acid polypeptide reads, in one-letter code: ATP-dependent helicase/deoxyribonuclease subunit B (1260 aa).

The protein belongs to the helicase family. AddB/RexB type 2 subfamily. Heterodimer of AddA and RexB. Mg(2+) is required as a cofactor.

Its function is as follows. The heterodimer acts as both an ATP-dependent DNA helicase and an ATP-dependent, dual-direction single-stranded exonuclease. Recognizes the chi site generating a DNA molecule suitable for the initiation of homologous recombination. This subunit has 5' -&gt; 3' nuclease activity but not helicase activity. The protein is ATP-dependent helicase/deoxyribonuclease subunit B of Limosilactobacillus reuteri (strain DSM 20016) (Lactobacillus reuteri).